Here is an 87-residue protein sequence, read N- to C-terminus: Small ribosomal subunit protein bS16 (87 aa).

Belongs to the bacterial ribosomal protein bS16 family.

The protein is Small ribosomal subunit protein bS16 of Nitrosospira multiformis (strain ATCC 25196 / NCIMB 11849 / C 71).